The sequence spans 339 residues: Protein-glutamate methylesterase/protein-glutamine glutaminase 3 (339 aa).

Residues 2-119 (NIGIVNDLPL…GLSTDASPQA (118 aa)) enclose the Response regulatory domain. D53 is modified (4-aspartylphosphate). The region spanning 141–336 (PGPAPTRGQP…PQLIARIALT (196 aa)) is the CheB-type methylesterase domain. Residues S158, H185, and D278 contribute to the active site.

The protein belongs to the CheB family. Post-translationally, phosphorylated by CheA. Phosphorylation of the N-terminal regulatory domain activates the methylesterase activity.

Its subcellular location is the cytoplasm. The catalysed reaction is [protein]-L-glutamate 5-O-methyl ester + H2O = L-glutamyl-[protein] + methanol + H(+). The enzyme catalyses L-glutaminyl-[protein] + H2O = L-glutamyl-[protein] + NH4(+). Involved in chemotaxis. Part of a chemotaxis signal transduction system that modulates chemotaxis in response to various stimuli. Catalyzes the demethylation of specific methylglutamate residues introduced into the chemoreceptors (methyl-accepting chemotaxis proteins or MCP) by CheR. Also mediates the irreversible deamidation of specific glutamine residues to glutamic acid. The chain is Protein-glutamate methylesterase/protein-glutamine glutaminase 3 from Burkholderia orbicola (strain AU 1054).